Here is a 618-residue protein sequence, read N- to C-terminus: Sodium/iodide cotransporter (618 aa).

Residues Met1–Pro14 lie on the Extracellular side of the membrane. A helical transmembrane segment spans residues Trp15–Gly31. At Leu32–Ala56 the chain is on the cytoplasmic side. Residues Val57–Ala80 traverse the membrane as a discontinuously helical segment. Na(+) contacts are provided by Ser69, Val71, and Gln72. Val76 is a binding site for iodide. At Ala81–Gly84 the chain is on the extracellular side. A helical membrane pass occupies residues Leu85–Phe105. Met90 contributes to the iodide binding site. Over Leu106 to Arg130 the chain is Cytoplasmic. A helical transmembrane segment spans residues Leu131–Asn157. Na(+) is bound at residue Tyr144. Residues Gln158 to Asp163 are Extracellular-facing. The helical transmembrane segment at Ile164–Val181 threads the bilayer. At Gly182–Trp189 the chain is on the cytoplasmic side. A helical transmembrane segment spans residues Thr190–Arg208. At Gly209–Thr243 the chain is on the extracellular side. The chain crosses the membrane as a discontinuously helical span at residues Phe244–Val266. Residue Trp255 participates in iodide binding. Position 258 (Met258) interacts with Na(+). Residues Gln267–Ala278 are Cytoplasmic-facing. A helical transmembrane segment spans residues Lys279–Ile301. The Extracellular segment spans residues Val302 to Asp335. A helical transmembrane segment spans residues Leu336–Ala363. Topologically, residues Ala364–Ile386 are cytoplasmic. Residues Ser387–Leu408 traverse the membrane as a helical segment. At Gly409–Gly411 the chain is on the extracellular side. A helical transmembrane segment spans residues Val412 to Leu437. Position 413 (Leu413) interacts with iodide. Residues Ser416 and Phe417 each contribute to the Na(+) site. An iodide-binding site is contributed by Phe417. At Pro438–Asn441 the chain is on the cytoplasmic side. The chain crosses the membrane as a helical span at residues Thr442–Leu465. Topologically, residues Tyr466–Ala520 are extracellular. Residues Asn485 and Asn497 are each glycosylated (N-linked (GlcNAc...) asparagine). Residues Val521–Thr545 traverse the membrane as a helical segment. The Cytoplasmic portion of the chain corresponds to Gly546–Leu618. Ser551 is subject to Phosphoserine; by PKA. Residues Pro571–Glu587 are compositionally biased toward basic and acidic residues. A disordered region spans residues Pro571 to Leu618.

It belongs to the sodium:solute symporter (SSF) (TC 2.A.21) family. As to quaternary structure, monomer. Post-translationally, glycosylated.

It localises to the cell membrane. It is found in the cytoplasm. It carries out the reaction iodide(out) + 2 Na(+)(out) = iodide(in) + 2 Na(+)(in). The catalysed reaction is chlorate(out) + 2 Na(+)(out) = chlorate(in) + 2 Na(+)(in). The enzyme catalyses thiocyanate(out) + 2 Na(+)(out) = thiocyanate(in) + 2 Na(+)(in). It catalyses the reaction nitrate(out) + 2 Na(+)(out) = nitrate(in) + 2 Na(+)(in). It carries out the reaction selenocyanate(out) + 2 Na(+)(out) = selenocyanate(in) + 2 Na(+)(in). With respect to regulation, perchlorate inhibits iodide transport activity. Oxyanions inhibit iodide transport activity by blocking the binding sites for iodide and one of the sodium ions. Functionally, sodium:iodide symporter that mediates the transport of iodide into the thyroid gland. Can also mediate the transport of chlorate, thiocynate, nitrate and selenocynate. In Mus musculus (Mouse), this protein is Sodium/iodide cotransporter (Slc5a5).